Reading from the N-terminus, the 257-residue chain is Dihydroorotate dehydrogenase B (NAD(+)), electron transfer subunit (257 aa).

In terms of domain architecture, FAD-binding FR-type spans M2 to L102. Residues R53–S56, I70–R72, and G77–T78 contribute to the FAD site. The [2Fe-2S] cluster site is built by C221, C226, C229, and C244.

Belongs to the PyrK family. As to quaternary structure, heterotetramer of 2 PyrK and 2 PyrD type B subunits. It depends on [2Fe-2S] cluster as a cofactor. FAD is required as a cofactor.

Its pathway is pyrimidine metabolism; UMP biosynthesis via de novo pathway; orotate from (S)-dihydroorotate (NAD(+) route): step 1/1. Responsible for channeling the electrons from the oxidation of dihydroorotate from the FMN redox center in the PyrD type B subunit to the ultimate electron acceptor NAD(+). In Geobacillus sp. (strain WCH70), this protein is Dihydroorotate dehydrogenase B (NAD(+)), electron transfer subunit.